The chain runs to 315 residues: Methionyl-tRNA formyltransferase (315 aa).

113–116 serves as a coordination point for (6S)-5,6,7,8-tetrahydrofolate; it reads SILP.

Belongs to the Fmt family.

It catalyses the reaction L-methionyl-tRNA(fMet) + (6R)-10-formyltetrahydrofolate = N-formyl-L-methionyl-tRNA(fMet) + (6S)-5,6,7,8-tetrahydrofolate + H(+). Its function is as follows. Attaches a formyl group to the free amino group of methionyl-tRNA(fMet). The formyl group appears to play a dual role in the initiator identity of N-formylmethionyl-tRNA by promoting its recognition by IF2 and preventing the misappropriation of this tRNA by the elongation apparatus. The protein is Methionyl-tRNA formyltransferase of Vibrio cholerae serotype O1 (strain M66-2).